The sequence spans 697 residues: Long-chain-fatty-acid--CoA ligase 6 (697 aa).

The helical; Signal-anchor for type III membrane protein transmembrane segment at 25–45 (LSATTLVSVGALAAVLAYWLT) threads the bilayer. The Cytoplasmic segment spans residues 46–697 (HRPKALQPPC…QIEELYLVSV (652 aa)).

This sequence belongs to the ATP-dependent AMP-binding enzyme family. The cofactor is Mg(2+).

Its subcellular location is the mitochondrion outer membrane. It is found in the peroxisome membrane. The protein localises to the microsome membrane. It localises to the endoplasmic reticulum membrane. The catalysed reaction is a long-chain fatty acid + ATP + CoA = a long-chain fatty acyl-CoA + AMP + diphosphate. The enzyme catalyses (5Z,8Z,11Z,14Z)-eicosatetraenoate + ATP + CoA = (5Z,8Z,11Z,14Z)-eicosatetraenoyl-CoA + AMP + diphosphate. It carries out the reaction 15-hydroxy-(5Z,8Z,11Z,13E)-eicosatetraenoate + ATP + CoA = 15-hydroxy-(5Z,8Z,11Z,13E)-eicosatetraenoyl-CoA + AMP + diphosphate. It catalyses the reaction 12-hydroxy-(5Z,8Z,10E,14Z)-eicosatetraenoate + ATP + CoA = 12-hydroxy-(5Z,8Z,10E,14Z)-eicosatetraenoyl-CoA + AMP + diphosphate. The catalysed reaction is 5-hydroxy-(6E,8Z,11Z,14Z)-eicosatetraenoate + ATP + CoA = 5-hydroxy-(6E,8Z,11Z,14Z)-eicosatetraenoyl-CoA + AMP + diphosphate. The enzyme catalyses hexadecanoate + ATP + CoA = hexadecanoyl-CoA + AMP + diphosphate. It carries out the reaction (E)-hexadec-2-enoate + ATP + CoA = (2E)-hexadecenoyl-CoA + AMP + diphosphate. In terms of biological role, catalyzes the conversion of long-chain fatty acids to their active form acyl-CoA for both synthesis of cellular lipids, and degradation via beta-oxidation. Plays an important role in fatty acid metabolism in brain and the acyl-CoAs produced may be utilized exclusively for the synthesis of the brain lipid. The sequence is that of Long-chain-fatty-acid--CoA ligase 6 (Acsl6) from Mus musculus (Mouse).